Consider the following 469-residue polypeptide: 3-isopropylmalate dehydratase large subunit (469 aa).

Cys346, Cys406, and Cys409 together coordinate [4Fe-4S] cluster.

It belongs to the aconitase/IPM isomerase family. LeuC type 1 subfamily. As to quaternary structure, heterodimer of LeuC and LeuD. [4Fe-4S] cluster is required as a cofactor.

It catalyses the reaction (2R,3S)-3-isopropylmalate = (2S)-2-isopropylmalate. The protein operates within amino-acid biosynthesis; L-leucine biosynthesis; L-leucine from 3-methyl-2-oxobutanoate: step 2/4. In terms of biological role, catalyzes the isomerization between 2-isopropylmalate and 3-isopropylmalate, via the formation of 2-isopropylmaleate. This is 3-isopropylmalate dehydratase large subunit from Lysinibacillus sphaericus (strain C3-41).